The sequence spans 90 residues: uncharacterized protein (90 aa).

The N-terminal stretch at 1 to 21 (MFKFSIPLLLFIFLFFSCINS) is a signal peptide. The disordered stretch occupies residues 56-90 (SNEKLPERILSGSSGSCSSCSISSSNGSSSRSSKQ). Over residues 66-90 (SGSSGSCSSCSISSSNGSSSRSSKQ) the composition is skewed to low complexity. Asparagine 81 is a glycosylation site (N-linked (GlcNAc...) asparagine).

This is an uncharacterized protein from Dictyostelium discoideum (Social amoeba).